Here is a 145-residue protein sequence, read N- to C-terminus: Large-conductance mechanosensitive channel (145 aa).

Helical transmembrane passes span 14-34 (VMDLAVGVIIGGAFGGIVKSL), 38-58 (LIMPIVGAIFGGFDFSNYFLP), and 81-101 (GSFLTVLINFLILAWIIFLMV).

It belongs to the MscL family. In terms of assembly, homopentamer.

It is found in the cell inner membrane. Functionally, channel that opens in response to stretch forces in the membrane lipid bilayer. May participate in the regulation of osmotic pressure changes within the cell. This chain is Large-conductance mechanosensitive channel, found in Rhizobium etli (strain CIAT 652).